The primary structure comprises 96 residues: Small ribosomal subunit protein bS18 (96 aa).

The tract at residues M1–S20 is disordered.

Belongs to the bacterial ribosomal protein bS18 family. In terms of assembly, part of the 30S ribosomal subunit. Forms a tight heterodimer with protein bS6.

In terms of biological role, binds as a heterodimer with protein bS6 to the central domain of the 16S rRNA, where it helps stabilize the platform of the 30S subunit. The chain is Small ribosomal subunit protein bS18 from Anaplasma phagocytophilum (strain HZ).